The primary structure comprises 265 residues: Adenosylcobinamide-GDP ribazoletransferase (265 aa).

A run of 7 helical transmembrane segments spans residues 40 to 60 (IAYAIPLAGAVIGLIGAVVLV), 67 to 87 (LPAFLASVLAVTALVLTTGAF), 121 to 141 (GGCALILALLLRVAALEALVA), 150 to 170 (LALVVAEAASRAAGVLLLLAL), 191 to 211 (LACALVAALLVVVILVPGFGI), 213 to 233 (TAFAGLIAPLVALFAMMRLSG), and 243 to 263 (VAGATQQVAVIVFLLGVLIFP).

Belongs to the CobS family. Mg(2+) serves as cofactor.

It is found in the cell inner membrane. It carries out the reaction alpha-ribazole + adenosylcob(III)inamide-GDP = adenosylcob(III)alamin + GMP + H(+). It catalyses the reaction alpha-ribazole 5'-phosphate + adenosylcob(III)inamide-GDP = adenosylcob(III)alamin 5'-phosphate + GMP + H(+). It participates in cofactor biosynthesis; adenosylcobalamin biosynthesis; adenosylcobalamin from cob(II)yrinate a,c-diamide: step 7/7. In terms of biological role, joins adenosylcobinamide-GDP and alpha-ribazole to generate adenosylcobalamin (Ado-cobalamin). Also synthesizes adenosylcobalamin 5'-phosphate from adenosylcobinamide-GDP and alpha-ribazole 5'-phosphate. The sequence is that of Adenosylcobinamide-GDP ribazoletransferase from Xanthobacter autotrophicus (strain ATCC BAA-1158 / Py2).